A 333-amino-acid chain; its full sequence is Adenosine deaminase (333 aa).

His-12 and His-14 together coordinate Zn(2+). Residues His-14, Asp-16, and Gly-170 each contribute to the substrate site. His-197 provides a ligand contact to Zn(2+). Glu-200 functions as the Proton donor in the catalytic mechanism. Asp-278 lines the Zn(2+) pocket. A substrate-binding site is contributed by Asp-279.

It belongs to the metallo-dependent hydrolases superfamily. Adenosine and AMP deaminases family. Adenosine deaminase subfamily. Zn(2+) serves as cofactor.

It catalyses the reaction adenosine + H2O + H(+) = inosine + NH4(+). The catalysed reaction is 2'-deoxyadenosine + H2O + H(+) = 2'-deoxyinosine + NH4(+). In terms of biological role, catalyzes the hydrolytic deamination of adenosine and 2-deoxyadenosine. In Salmonella agona (strain SL483), this protein is Adenosine deaminase.